Reading from the N-terminus, the 334-residue chain is 4-hydroxy-2-methyl-3-oxo-4-farnesyl-3,4-dihydroquinoline-1-oxide ketoreductase (334 aa).

Residue tyrosine 139 is the Proton donor of the active site.

Belongs to the 3-beta-HSD family.

It catalyses the reaction aurachin B + NAD(+) + H2O = 4-hydroxy-2-methyl-3-oxo-4-[(2E,6E)-farnesyl]-3,4-dihydroquinoline 1-oxide + NADH. It carries out the reaction 3,4-dihydroxy-2-methyl-4-[(2E,6E)-farnesyl]-3,4-dihydroquinoline 1-oxide + NAD(+) = 4-hydroxy-2-methyl-3-oxo-4-[(2E,6E)-farnesyl]-3,4-dihydroquinoline 1-oxide + NADH + H(+). In terms of biological role, ketoreductase that catalyzes the final step in the conversion of aurachin C to aurachin B. Catalyzes the reduction of 4-hydroxy-2-methyl-3-oxo-4-[(2E,6E)-farnesyl]-3,4-dihydroquinoline-1-oxide to form 3,4-dihydroxy-2-methyl-4-[(2E,6E)-farnesyl]-3,4-dihydroquinoline 1-oxide, which then undergoes a spontaneous dehydration to form aurachin B. Accepts both NADH and NADPH, but has a preference for NADH. This chain is 4-hydroxy-2-methyl-3-oxo-4-farnesyl-3,4-dihydroquinoline-1-oxide ketoreductase, found in Stigmatella aurantiaca.